The chain runs to 1783 residues: Trans-splicing factor Raa3, chloroplastic (1783 aa).

A chloroplast-targeting transit peptide spans 1–40 (MKADLATAKGSSPAFSAPRTYRARLLSRCLNKCFNTVLVS). 8 disordered regions span residues 97-378 (ATTH…VGVN), 420-484 (ATSA…VAAQ), 563-610 (ARVG…SATK), 652-709 (STEP…SPAA), 918-971 (AAPT…QRAS), 1395-1427 (RDAK…QQHQ), 1476-1506 (PAPA…RRSR), and 1620-1639 (VKGR…DVQG). The segment covering 105 to 118 (DSGGQGPAAAGGRG) has biased composition (gly residues). 3 stretches are compositionally biased toward low complexity: residues 126–157 (QAAA…PQRP), 186–205 (AVDA…PAPA), and 224–242 (AGKP…VGPQ). Over residues 256–273 (DESHMGLTHRDQGHDERI) the composition is skewed to basic and acidic residues. The span at 277 to 289 (AGEAWKAGAVAAP) shows a compositional bias: low complexity. Over residues 307–316 (LASSALGTHS) the composition is skewed to polar residues. Composition is skewed to low complexity over residues 343-374 (SGSS…ITSN), 420-436 (ATSA…SSSS), 577-599 (RPVQ…SQPG), 655-669 (PLAA…ASAS), 676-709 (SSSN…SPAA), 928-970 (SAAA…PQRA), and 1403-1417 (QSAA…AAQD). Composition is skewed to basic residues over residues 1494 to 1506 (KSRR…RRSR) and 1620 to 1630 (VKGRGRGRRTA). The 60-residue stretch at 1713–1772 (LAVGAAAGGAVIRNSRWLLSGAGALRRRLLTHAGWLVVPVRERQWKDLRSAEQQRRVVRE) folds into the RAP domain.

In terms of assembly, part of a 1700 kDa complex that includes the precursor RNA to exon 1 and the tscA RNA.

Its subcellular location is the plastid. The protein localises to the chloroplast stroma. In terms of biological role, required for trans-splicing of exons 1 and 2 of the chloroplast encoded psaA mRNA (a group II intron). May be required for stability of the chloroplast RNA-protein complex in which it is found. The sequence is that of Trans-splicing factor Raa3, chloroplastic (RAA3) from Chlamydomonas reinhardtii (Chlamydomonas smithii).